A 785-amino-acid polypeptide reads, in one-letter code: MADLDSPQKLSGVPRPPDGVGGGSCSEISTELIRSLTDLQELEAVYERLCGEEKVVERELDALLEQQNTIESKMVTLHRMGPNLQLIEGDAKQLAGMITFTCNLAENVSSKVRQLDLAKNRLYQAIQRADDILDLKFCMDGVQTALRNEDYEQAAAHIHRYLCLDKSVIELSRQGKEGSMIDANLKLLQEAEQRLKAIVTEKFAVATKEGDLPQVERFFKIFPLLGLHEEGLSKFSEYLCKQVASKAEENLLLVLGTDMSDRRAAVIFADTLTLLFEGIARIVETHQPIVETYYGPGRLYTLIKYLQVECDRQVEKVVDKFIKQRDYRQQFRHVQSNLMRNSTSEKIEPRELDPILTEVTLMNARSELYLRFLRKRISSDFEVGDSMASEEVKQEHQKCLDKLLNNCLLSCTMQELIGLYITMEEYFMRETVNKAVALDTYEKGQLTSSMVDDVFYIVKKCIGRALSSSSIDCLCAMINLATTELESDFRDVLCHKLRMGFPATTLQDIQRGVTSAVSIMHSSLQQGKFDTKGIESTDEAKLSFLVTLNNVEVCSENISTLKKTLESDCTKLFSQGIGGEQAQAKFDSCLSDLAAVSGKFRDLLQEGLTELNSTAIKPQVQPWINTFLSVSHNIEEEEFSDYEANDPWVQQFILNLEQQMAEFKAGLSPVIYDSLTSLMTSLVAVELEKVVLKSTFNRLGGLQFDKELRSLIAYLTTVTTWTIRDKFARLSQMATILNLERVTEILDYWGANSGPLTWRLTPAEVRQVLALRIDFRSEDIKRLRL.

Residues 1–25 are disordered; sequence MADLDSPQKLSGVPRPPDGVGGGSC. Ala2 is modified (N-acetylalanine). The interval 2–84 is interaction with SCFD1; it reads ADLDSPQKLS…VTLHRMGPNL (83 aa). Phosphoserine is present on Ser6. The tract at residues 85-153 is interaction with STX5; that stretch reads QLIEGDAKQL…TALRNEDYEQ (69 aa). The tract at residues 618 to 740 is d domain; the sequence is PQVQPWINTF…SQMATILNLE (123 aa). The e domain; essential for proper cell surface glycosylation stretch occupies residues 741–785; that stretch reads RVTEILDYWGANSGPLTWRLTPAEVRQVLALRIDFRSEDIKRLRL.

This sequence belongs to the COG4 family. As to quaternary structure, monomer. Component of the conserved oligomeric Golgi (COG) complex which is composed of eight different subunits and is required for normal Golgi morphology and localization. Mediates interaction of SCFD1 with the COG complex. Interacts with STX5.

It is found in the cytoplasm. The protein localises to the cytosol. Its subcellular location is the golgi apparatus membrane. Functionally, required for normal Golgi function. Plays a role in SNARE-pin assembly and Golgi-to-ER retrograde transport via its interaction with SCFD1. The sequence is that of Conserved oligomeric Golgi complex subunit 4 (COG4) from Bos taurus (Bovine).